The primary structure comprises 419 residues: UDP-N-acetylglucosamine 1-carboxyvinyltransferase 2 (419 aa).

24–25 (KN) contributes to the phosphoenolpyruvate binding site. Arginine 94 provides a ligand contact to UDP-N-acetyl-alpha-D-glucosamine. The Proton donor role is filled by cysteine 118. 2-(S-cysteinyl)pyruvic acid O-phosphothioketal is present on cysteine 118. UDP-N-acetyl-alpha-D-glucosamine-binding positions include 123-127 (RPIDQ), aspartate 307, and isoleucine 329.

It belongs to the EPSP synthase family. MurA subfamily.

The protein localises to the cytoplasm. It carries out the reaction phosphoenolpyruvate + UDP-N-acetyl-alpha-D-glucosamine = UDP-N-acetyl-3-O-(1-carboxyvinyl)-alpha-D-glucosamine + phosphate. The protein operates within cell wall biogenesis; peptidoglycan biosynthesis. In terms of biological role, cell wall formation. Adds enolpyruvyl to UDP-N-acetylglucosamine. This chain is UDP-N-acetylglucosamine 1-carboxyvinyltransferase 2, found in Staphylococcus aureus (strain MSSA476).